Reading from the N-terminus, the 225-residue chain is Ribosomal RNA small subunit methyltransferase G (225 aa).

Residues G71, L76, 121 to 122 (AE), and R139 each bind S-adenosyl-L-methionine. Positions 204–225 (VVEARRATPSNGRGRPGRSSRR) are disordered.

Belongs to the methyltransferase superfamily. RNA methyltransferase RsmG family.

The protein localises to the cytoplasm. Its function is as follows. Specifically methylates the N7 position of guanine in position 518 of 16S rRNA. This Mycobacterium sp. (strain KMS) protein is Ribosomal RNA small subunit methyltransferase G.